The following is a 296-amino-acid chain: Mycothiol acetyltransferase (296 aa).

N-acetyltransferase domains lie at 8–146 and 151–296; these read RSPE…PPVE and ISVR…GPPV. A 1D-myo-inositol 2-(L-cysteinylamino)-2-deoxy-alpha-D-glucopyranoside-binding site is contributed by E39. 76–78 provides a ligand contact to acetyl-CoA; the sequence is VVT. Positions 178, 220, and 228 each coordinate 1D-myo-inositol 2-(L-cysteinylamino)-2-deoxy-alpha-D-glucopyranoside. Residues 232–234 and 239–245 each bind acetyl-CoA; these read VGV and QGEGLGR. Y266 provides a ligand contact to 1D-myo-inositol 2-(L-cysteinylamino)-2-deoxy-alpha-D-glucopyranoside.

This sequence belongs to the acetyltransferase family. MshD subfamily. Monomer.

It catalyses the reaction 1D-myo-inositol 2-(L-cysteinylamino)-2-deoxy-alpha-D-glucopyranoside + acetyl-CoA = mycothiol + CoA + H(+). In terms of biological role, catalyzes the transfer of acetyl from acetyl-CoA to desacetylmycothiol (Cys-GlcN-Ins) to form mycothiol. This chain is Mycothiol acetyltransferase, found in Kytococcus sedentarius (strain ATCC 14392 / DSM 20547 / JCM 11482 / CCUG 33030 / NBRC 15357 / NCTC 11040 / CCM 314 / 541) (Micrococcus sedentarius).